The primary structure comprises 800 residues: Phenylalanine--tRNA ligase beta subunit (800 aa).

Residues 39-154 (TKDIKNLVVG…ESQVPGTDAL (116 aa)) enclose the tRNA-binding domain. Positions 408-483 (AFITPIDITA…RIYGYDDIPS (76 aa)) constitute a B5 domain. Aspartate 461, aspartate 467, glutamate 470, and glutamate 471 together coordinate Mg(2+). Residues 708-800 (PIFPGMSRDI…ALIEQGAVIR (93 aa)) enclose the FDX-ACB domain.

Belongs to the phenylalanyl-tRNA synthetase beta subunit family. Type 1 subfamily. In terms of assembly, tetramer of two alpha and two beta subunits. The cofactor is Mg(2+).

It localises to the cytoplasm. It catalyses the reaction tRNA(Phe) + L-phenylalanine + ATP = L-phenylalanyl-tRNA(Phe) + AMP + diphosphate + H(+). This is Phenylalanine--tRNA ligase beta subunit from Staphylococcus aureus (strain bovine RF122 / ET3-1).